The primary structure comprises 66 residues: Large ribosomal subunit protein bL35 (66 aa).

Residues 25–45 form a disordered region; that stretch reads QAAGKRHGMSKRPQKMKRNAR. Over residues 28-44 the composition is skewed to basic residues; sequence GKRHGMSKRPQKMKRNA.

This sequence belongs to the bacterial ribosomal protein bL35 family.

The protein is Large ribosomal subunit protein bL35 of Rhodospirillum centenum (strain ATCC 51521 / SW).